The primary structure comprises 275 residues: Ovocalyxin-32 (275 aa).

The signal sequence occupies residues 1–23 (MPGLRAALPAALLLLSSFPPAAA). Cystatin LXN-type domains lie at 32 to 131 (PGVM…NKKQ) and 151 to 255 (TANY…GLED). The interval 254–275 (EDGSGQDSGSAAGTSHETKGNF) is disordered. Residues 256 to 268 (GSGQDSGSAAGTS) show a composition bias toward low complexity.

It belongs to the protease inhibitor I47 (latexin) family. Expressed at high levels in the uterine and isthmus regions of the oviduct, and concentrated in the eggshell.

It is found in the secreted. In terms of biological role, component of the matrix of the eggshell. The sequence is that of Ovocalyxin-32 from Gallus gallus (Chicken).